The following is a 449-amino-acid chain: Phosphoglucosamine mutase (449 aa).

The active-site Phosphoserine intermediate is Ser-101. 4 residues coordinate Mg(2+): Ser-101, Asp-242, Asp-244, and Asp-246. At Ser-101 the chain carries Phosphoserine.

The protein belongs to the phosphohexose mutase family. Requires Mg(2+) as cofactor. Activated by phosphorylation.

The catalysed reaction is alpha-D-glucosamine 1-phosphate = D-glucosamine 6-phosphate. Functionally, catalyzes the conversion of glucosamine-6-phosphate to glucosamine-1-phosphate. This Bradyrhizobium sp. (strain BTAi1 / ATCC BAA-1182) protein is Phosphoglucosamine mutase.